The chain runs to 118 residues: T cell receptor gamma variable 4 (118 aa).

The signal sequence occupies residues 1–17 (MQWALAVLLAFLSPASQ). The Ig-like domain maps to 18–118 (KSSNLEGRTK…GVYYCATWDG (101 aa)). C41 and C113 are oxidised to a cystine. N106 is a glycosylation site (N-linked (GlcNAc...) asparagine).

Gamma-delta TR is a heterodimer composed of a gamma and delta chain; disulfide-linked. The gamma-delta TR is associated with the transmembrane signaling CD3 coreceptor proteins following the stoichiometry: a single gamma-delta TR heterodimer associates with one CD3D-CD3E heterodimer, one CD3G-CD3E heterodimer and one CD247 homodimer forming a stable octameric structure. Upon activation, gamma-delta TR complex associates with FCER1G to initiate intracellular signaling.

Its subcellular location is the cell membrane. In terms of biological role, v region of the variable domain of T cell receptor (TR) gamma chain that participates in the antigen recognition. Gamma-delta TRs recognize a variety of self and foreign non-peptide antigens frequently expressed at the epithelial boundaries between the host and external environment, including endogenous lipids presented by MH-like protein CD1D and phosphoantigens presented by butyrophilin-like molecule BTN3A1. Upon antigen recognition induces rapid, innate-like immune responses involved in pathogen clearance and tissue repair. Binding of gamma-delta TR complex to antigen triggers phosphorylation of immunoreceptor tyrosine-based activation motifs (ITAMs) in the CD3 chains by the LCK and FYN kinases, allowing the recruitment, phosphorylation, and activation of ZAP70 that facilitates phosphorylation of the scaffolding proteins LCP2 and LAT. This lead to the formation of a supramolecular signalosome that recruits the phospholipase PLCG1, resulting in calcium mobilization and ERK activation, ultimately leading to T cell expansion and differentiation into effector cells. Gamma-delta TRs are produced through somatic rearrangement of a limited repertoire of variable (V), diversity (D), and joining (J) genes. The potential diversity of gamma-delta TRs is conferred by the unique ability to rearrange (D) genes in tandem and to utilize all three reading frames. The combinatorial diversity is considerably increased by the sequence exonuclease trimming and random nucleotide (N) region additions which occur during the V-(D)-J rearrangements. This is T cell receptor gamma variable 4 from Homo sapiens (Human).